The sequence spans 258 residues: Adenosylcobinamide-GDP ribazoletransferase (258 aa).

6 helical membrane-spanning segments follow: residues 41–61, 65–85, 115–135, 136–156, 197–217, and 236–256; these read FFPL…WLAS, PAPG…TGAF, IGAF…QLLM, AMAA…HAAS, LPLL…LLAA, and CLGL…LAWT.

It belongs to the CobS family. Mg(2+) serves as cofactor.

It is found in the cell inner membrane. It carries out the reaction alpha-ribazole + adenosylcob(III)inamide-GDP = adenosylcob(III)alamin + GMP + H(+). The enzyme catalyses alpha-ribazole 5'-phosphate + adenosylcob(III)inamide-GDP = adenosylcob(III)alamin 5'-phosphate + GMP + H(+). Its pathway is cofactor biosynthesis; adenosylcobalamin biosynthesis; adenosylcobalamin from cob(II)yrinate a,c-diamide: step 7/7. In terms of biological role, joins adenosylcobinamide-GDP and alpha-ribazole to generate adenosylcobalamin (Ado-cobalamin). Also synthesizes adenosylcobalamin 5'-phosphate from adenosylcobinamide-GDP and alpha-ribazole 5'-phosphate. This Ralstonia nicotianae (strain ATCC BAA-1114 / GMI1000) (Ralstonia solanacearum) protein is Adenosylcobinamide-GDP ribazoletransferase.